The following is a 384-amino-acid chain: MSTKRDYYEVLGISKGAEAQEIKKAYRKLAMKYHPDRNPGDKEAEEKFKEINEAYEVLSDDTKRKTYDQFGHDGLNGQGGFGGQGGFGGQGFGGFEDMFGDIFGDMFGGSFGGGRARRRGPQRGADIRQSVTISFEEAAFGKKMSIKVNRSEECEECNGTGAKPGTSKKTCSTCNGTGQVRTVQRTPFGNIASSRPCSACNGTGEVIESPCSKCHGTGNTRKVKTIEVDIPAGIDDGQMIKLSGQGEVGEKGAPRGDLYIVVNVKSHPLFTRDGNDIYFEMPITFVQATLGDEIEVPTLDGKVKYSVPEGTQTGTVFRLKEKGIPRIRGNSRGDQYVKVVVEIPKKLNDKQKELLREFAKECGSNVHEKKKTFGQKIEDMFKKK.

The 66-residue stretch at 6 to 71 (DYYEVLGISK…TKRKTYDQFG (66 aa)) folds into the J domain. The CR-type zinc-finger motif lies at 141–223 (GKKMSIKVNR…CHGTGNTRKV (83 aa)). Cysteine 154, cysteine 157, cysteine 171, cysteine 174, cysteine 197, cysteine 200, cysteine 211, and cysteine 214 together coordinate Zn(2+). CXXCXGXG motif repeat units lie at residues 154-161 (CEECNGTG), 171-178 (CSTCNGTG), 197-204 (CSACNGTG), and 211-218 (CSKCHGTG).

Belongs to the DnaJ family. As to quaternary structure, homodimer. Zn(2+) is required as a cofactor.

The protein localises to the cytoplasm. In terms of biological role, participates actively in the response to hyperosmotic and heat shock by preventing the aggregation of stress-denatured proteins and by disaggregating proteins, also in an autonomous, DnaK-independent fashion. Unfolded proteins bind initially to DnaJ; upon interaction with the DnaJ-bound protein, DnaK hydrolyzes its bound ATP, resulting in the formation of a stable complex. GrpE releases ADP from DnaK; ATP binding to DnaK triggers the release of the substrate protein, thus completing the reaction cycle. Several rounds of ATP-dependent interactions between DnaJ, DnaK and GrpE are required for fully efficient folding. Also involved, together with DnaK and GrpE, in the DNA replication of plasmids through activation of initiation proteins. This chain is Chaperone protein DnaJ, found in Clostridioides difficile (strain 630) (Peptoclostridium difficile).